A 273-amino-acid polypeptide reads, in one-letter code: Cyclic di-AMP synthase CdaA (273 aa).

Transmembrane regions (helical) follow at residues L12–I32, L40–S60, and T61–F81. In terms of domain architecture, DAC spans Q82 to E242.

Belongs to the adenylate cyclase family. DacA/CdaA subfamily. In terms of assembly, probably a homodimer. Interacts with CdaR. May interact with GlmM.

Its subcellular location is the cell membrane. It carries out the reaction 2 ATP = 3',3'-c-di-AMP + 2 diphosphate. With respect to regulation, DAC activity is stimulated about 20-fold in E.coli by coexpression with CdaR. Functionally, one of 3 paralogous diadenylate cyclases (DAC) in this bacteria, catalyzing the condensation of 2 ATP molecules into cyclic di-AMP (c-di-AMP). Upon expression in E.coli leads to c-di-AMP synthesis. Probably the main producer of c-di-AMP for the cell; is probably implicated in control of peptidoglycan synthesis. In B.subtilis c-di-AMP is a second messenger that mediates growth, DNA repair and cell wall homeostasis; it is toxic when present in excess. The protein is Cyclic di-AMP synthase CdaA of Bacillus subtilis (strain 168).